Reading from the N-terminus, the 181-residue chain is Large ribosomal subunit protein uL5 (181 aa).

Belongs to the universal ribosomal protein uL5 family. Part of the 50S ribosomal subunit; contacts the 5S rRNA and probably tRNA. Forms a bridge to the 30S subunit in the 70S ribosome.

This is one of the proteins that bind and probably mediate the attachment of the 5S RNA into the large ribosomal subunit, where it forms part of the central protuberance. In the 70S ribosome it contacts protein S13 of the 30S subunit (bridge B1b), connecting the 2 subunits; this bridge is implicated in subunit movement. May contact the P site tRNA; the 5S rRNA and some of its associated proteins might help stabilize positioning of ribosome-bound tRNAs. In Methanococcus maripaludis (strain C5 / ATCC BAA-1333), this protein is Large ribosomal subunit protein uL5.